Here is an 83-residue protein sequence, read N- to C-terminus: High-potential iron-sulfur protein (83 aa).

[4Fe-4S] cluster-binding residues include cysteine 43, cysteine 46, cysteine 61, and cysteine 75.

This sequence belongs to the high-potential iron-sulfur protein (HiPIP) family. Homodimer.

Its subcellular location is the periplasm. Specific class of high-redox-potential 4Fe-4S ferredoxins. Functions in anaerobic electron transport in most purple and in some other photosynthetic bacteria and in at least one genus (Paracoccus) of halophilic, denitrifying bacteria. The sequence is that of High-potential iron-sulfur protein from Isochromatium buderi (Chromatium buderi).